Consider the following 374-residue polypeptide: Chaperone protein DnaJ (374 aa).

The J domain occupies 5–70 (DYYEILEIER…GKRQLYDRYG (66 aa)). A CR-type zinc finger spans residues 136–213 (GCKKEIKIRY…CNGKGHENKE (78 aa)). 8 residues coordinate Zn(2+): Cys-149, Cys-152, Cys-165, Cys-168, Cys-187, Cys-190, Cys-201, and Cys-204. CXXCXGXG motif repeat units follow at residues 149–156 (CPDCKGTG), 165–172 (CPDCGGRG), 187–194 (CPKCGGSG), and 201–208 (CPKCNGKG).

Belongs to the DnaJ family. In terms of assembly, homodimer. It depends on Zn(2+) as a cofactor.

The protein resides in the cytoplasm. In terms of biological role, participates actively in the response to hyperosmotic and heat shock by preventing the aggregation of stress-denatured proteins and by disaggregating proteins, also in an autonomous, DnaK-independent fashion. Unfolded proteins bind initially to DnaJ; upon interaction with the DnaJ-bound protein, DnaK hydrolyzes its bound ATP, resulting in the formation of a stable complex. GrpE releases ADP from DnaK; ATP binding to DnaK triggers the release of the substrate protein, thus completing the reaction cycle. Several rounds of ATP-dependent interactions between DnaJ, DnaK and GrpE are required for fully efficient folding. Also involved, together with DnaK and GrpE, in the DNA replication of plasmids through activation of initiation proteins. The chain is Chaperone protein DnaJ from Wolinella succinogenes (strain ATCC 29543 / DSM 1740 / CCUG 13145 / JCM 31913 / LMG 7466 / NCTC 11488 / FDC 602W) (Vibrio succinogenes).